Here is a 495-residue protein sequence, read N- to C-terminus: Zinc finger and SCAN domain-containing protein 5B (495 aa).

The tract at residues 1-40 is disordered; sequence MAANWTLSWGQGGPCNSPGSDTPRSVASPETQLGNHDRNP. The segment covering 17-34 has biased composition (polar residues); sequence SPGSDTPRSVASPETQLG. The SCAN box domain maps to 44–126; sequence HMNFRMFSCP…DLLRNNRRPK (83 aa). 2 disordered regions span residues 150-183 and 227-347; these read APAS…RREQ and ENRE…PDGQ. The span at 161 to 173 shows a compositional bias: polar residues; it reads VSSQWASSVNQMH. Basic and acidic residues predominate over residues 250–262; sequence RAKEGKEPQKRAS. Residues 292–310 show a composition bias toward polar residues; it reads NLSSPKRSKPDASSISQEE. 5 consecutive C2H2-type zinc fingers follow at residues 355-377, 383-405, 411-433, 439-461, and 467-489; these read FACD…RRSH, FQCD…QRVH, YMCD…KRIH, FKCK…QRTH, and YKCP…LKTH.

The protein resides in the nucleus. Its function is as follows. May be involved in transcriptional regulation. In Homo sapiens (Human), this protein is Zinc finger and SCAN domain-containing protein 5B (ZSCAN5B).